Consider the following 1519-residue polypeptide: Dicer-like protein 1 (1519 aa).

Residues 1-13 (MTHQNTETASLAT) are compositionally biased toward polar residues. Residues 1–62 (MTHQNTETAS…KDPSQRQRQQ (62 aa)) form a disordered region. Acidic residues predominate over residues 39-48 (SDESEGSEEE). Positions 116–297 (LFERAKVQNT…EAARNLEALL (182 aa)) constitute a Helicase ATP-binding domain. 129–136 (LDTGSGKT) is an ATP binding site. The DEAH box motif lies at 242-245 (DEAH). The Helicase C-terminal domain occupies 431–601 (ALSSKVRVLW…QLLPEDRILH (171 aa)). Residues 634 to 724 (AITVLARYAS…NSVYHRRLPA (91 aa)) form the Dicer dsRNA-binding fold domain. The PAZ domain maps to 882 to 1001 (DDIEYQADMP…ICIEPLKISA (120 aa)). RNase III domains lie at 1026–1184 (GLEA…LTPG) and 1235–1387 (CRRV…VDSN). Residues Glu-1275, Asp-1373, and Glu-1376 each coordinate Mg(2+). A DRBM domain is found at 1421–1489 (TFLHNKLTNE…SENALTELLH (69 aa)). Residues Cys-1433, His-1460, Cys-1501, and Cys-1503 each contribute to the Zn(2+) site.

The protein belongs to the helicase family. Dicer subfamily. It depends on Mg(2+) as a cofactor. Mn(2+) is required as a cofactor.

Functionally, dicer-like endonuclease involved in cleaving double-stranded RNA in the RNA interference (RNAi) pathway. Produces 21 to 25 bp dsRNAs (siRNAs) which target the selective destruction of homologous RNAs leading to sequence-specific suppression of gene expression, called post-transcriptional gene silencing (PTGS). Part of a broad host defense response against viral infection and transposons. The protein is Dicer-like protein 1 (dcl1) of Aspergillus terreus (strain NIH 2624 / FGSC A1156).